Reading from the N-terminus, the 982-residue chain is Collagen alpha-1(I) chain (982 aa).

Residues 1 to 982 (GPMGPSGPRG…PGAPGPPGPP (982 aa)) form a disordered region. Positions 8 to 27 (PRGFQGPPGEPGEPGASGPM) are enriched in low complexity. A compositionally biased stretch (basic and acidic residues) spans 39-53 (NGDDGEAGKPGRPGE). A Phosphoserine modification is found at serine 81. Low complexity-rich tracts occupy residues 89 to 105 (DAGP…PGEN) and 128 to 141 (PAGA…TGAA). A compositionally biased stretch (pro residues) spans 143–155 (PPGPTGPAGPPGF). The span at 189 to 228 (AGAAGPAGNPGADGQPGAKGANGAPGIAGAPGFPGARGPS) shows a compositional bias: low complexity. The span at 294 to 303 (GERGGPGSRG) shows a compositional bias: gly residues. Low complexity-rich tracts occupy residues 304–335 (FPGA…PGEA), 347–373 (KGIT…QDGR), 382–401 (ARGQ…AGEP), 425–437 (AGAQ…AGPA), 513–526 (APGA…PGIQ), 583–597 (SGPS…ARGA), 610–640 (AGFA…AGPA), 666–682 (SAGP…AGRV), and 727–751 (AGEK…QGIA). Serine 586 is subject to Phosphoserine. Pro residues-rich tracts occupy residues 792-802 (PPGPIGPPGIA) and 838-853 (AGPP…PGPV). Residues 874–888 (IGPTGARGPAGPQGP) show a composition bias toward low complexity. Positions 889–900 (RGDKGETGEQGD) are enriched in basic and acidic residues. Positions 916 to 940 (PGEQGPAGASGPAGPRGPPGSAGAP) are enriched in low complexity. Positions 966–982 (PRGPPGPPGAPGPPGPP) are enriched in pro residues.

Belongs to the fibrillar collagen family. In terms of assembly, trimers of one alpha 2(I) and two alpha 1(I) chains. Post-translationally, prolines at the third position of the tripeptide repeating unit (G-X-Y) are hydroxylated in some or all of the chains. In terms of tissue distribution, forms the fibrils of tendon, ligaments and bones. In bones, the fibrils are mineralized with calcium hydroxyapatite.

It localises to the secreted. The protein localises to the extracellular space. Its subcellular location is the extracellular matrix. Its function is as follows. Type I collagen is a member of group I collagen (fibrillar forming collagen). The sequence is that of Collagen alpha-1(I) chain from Toxodon sp.